We begin with the raw amino-acid sequence, 97 residues long: Co-chaperonin GroES (97 aa).

It belongs to the GroES chaperonin family. In terms of assembly, heptamer of 7 subunits arranged in a ring. Interacts with the chaperonin GroEL.

The protein resides in the cytoplasm. Together with the chaperonin GroEL, plays an essential role in assisting protein folding. The GroEL-GroES system forms a nano-cage that allows encapsulation of the non-native substrate proteins and provides a physical environment optimized to promote and accelerate protein folding. GroES binds to the apical surface of the GroEL ring, thereby capping the opening of the GroEL channel. This chain is Co-chaperonin GroES, found in Pseudomonas putida (strain ATCC 700007 / DSM 6899 / JCM 31910 / BCRC 17059 / LMG 24140 / F1).